The sequence spans 196 residues: Pyridoxal 5'-phosphate synthase subunit PdxT (196 aa).

Residue 47 to 49 participates in L-glutamine binding; it reads GES. Catalysis depends on Cys79, which acts as the Nucleophile. Residues Arg106 and 134–135 contribute to the L-glutamine site; that span reads IR. Residues His170 and Glu172 each act as charge relay system in the active site.

It belongs to the glutaminase PdxT/SNO family. In terms of assembly, in the presence of PdxS, forms a dodecamer of heterodimers. Only shows activity in the heterodimer.

The enzyme catalyses aldehydo-D-ribose 5-phosphate + D-glyceraldehyde 3-phosphate + L-glutamine = pyridoxal 5'-phosphate + L-glutamate + phosphate + 3 H2O + H(+). It catalyses the reaction L-glutamine + H2O = L-glutamate + NH4(+). It functions in the pathway cofactor biosynthesis; pyridoxal 5'-phosphate biosynthesis. Its function is as follows. Catalyzes the hydrolysis of glutamine to glutamate and ammonia as part of the biosynthesis of pyridoxal 5'-phosphate. The resulting ammonia molecule is channeled to the active site of PdxS. The sequence is that of Pyridoxal 5'-phosphate synthase subunit PdxT from Halalkalibacterium halodurans (strain ATCC BAA-125 / DSM 18197 / FERM 7344 / JCM 9153 / C-125) (Bacillus halodurans).